Here is a 177-residue protein sequence, read N- to C-terminus: Cell division inhibitor SulA (177 aa).

Positions 112–118 (ALASGNY) are ftsZ binding. The lon protease binding stretch occupies residues 170–177 (KIHSIHYH).

The protein belongs to the SulA family. Interacts with FtsZ. Post-translationally, is rapidly cleaved and degraded by the Lon protease once DNA damage is repaired.

Functionally, component of the SOS system and an inhibitor of cell division. Accumulation of SulA causes rapid cessation of cell division and the appearance of long, non-septate filaments. In the presence of GTP, binds a polymerization-competent form of FtsZ in a 1:1 ratio, thus inhibiting FtsZ polymerization and therefore preventing it from participating in the assembly of the Z ring. This mechanism prevents the premature segregation of damaged DNA to daughter cells during cell division. This Photorhabdus laumondii subsp. laumondii (strain DSM 15139 / CIP 105565 / TT01) (Photorhabdus luminescens subsp. laumondii) protein is Cell division inhibitor SulA.